Here is a 59-residue protein sequence, read N- to C-terminus: UPF0181 protein YoaH (59 aa).

It belongs to the UPF0181 family.

This chain is UPF0181 protein YoaH, found in Salmonella arizonae (strain ATCC BAA-731 / CDC346-86 / RSK2980).